A 750-amino-acid polypeptide reads, in one-letter code: GTP pyrophosphokinase rsh (750 aa).

The region spanning 45–144 (YFSHPLEVAA…VKLADRLHNM (100 aa)) is the HD domain. In terms of domain architecture, TGS spans 390 to 451 (DQVFCFTPKG…KNGDEVDIIR (62 aa)). The interval 587–613 (AAKVDPAATTPKPGKRALPIRGTNPDL) is disordered. The ACT domain maps to 676–750 (RISVSAINSP…SVSSAKRVNG (75 aa)).

The protein belongs to the RelA/SpoT family.

The catalysed reaction is GTP + ATP = guanosine 3'-diphosphate 5'-triphosphate + AMP. Its function is as follows. Functions as a (p)ppGpp synthase. In eubacteria ppGpp (guanosine 3'-diphosphate 5'-diphosphate) is a mediator of the stringent response that coordinates a variety of cellular activities in response to changes in nutritional abundance. It is necessary for persistence in mice, essential for intracellular growth of Brucella and required for expression of the type IV secretion system VirB and therefore plays a role in adaptation of Brucella to its intracellular host environment. This chain is GTP pyrophosphokinase rsh (rsh), found in Brucella suis biovar 1 (strain 1330).